The sequence spans 374 residues: DNA replication and repair protein RecF (374 aa).

Residue 34 to 41 coordinates ATP; that stretch reads GDNGAGKT.

Belongs to the RecF family.

The protein localises to the cytoplasm. Functionally, the RecF protein is involved in DNA metabolism; it is required for DNA replication and normal SOS inducibility. RecF binds preferentially to single-stranded, linear DNA. It also seems to bind ATP. The polypeptide is DNA replication and repair protein RecF (Rhizobium etli (strain ATCC 51251 / DSM 11541 / JCM 21823 / NBRC 15573 / CFN 42)).